A 569-amino-acid chain; its full sequence is MTELAGASSSCCHRPAGRGAMQSVLHHFQRLRGREGGSHFINTSSPRGEAKMSITSDEVNFLVYRYLQESGFSHSAFTFGIESHISQSNINGTLVPPAALISILQKGLQYVEAEISINEDGTVFDGRPIESLSLIDAVMPDVVQTRQRAFREKLAQQQASAAAAAAAATTSASVSQQNPSKNREATVNGEENRAHSVNNHAKPMEIDGEVDIPSSKATVLRGHESEVFICAWNPVSDLLASGSGDSTARIWNLNENSNGGSTQLVLRHCIREGGHDVPSNKDVTSLDWNTNGTLLATGSYDGFARIWTEDGNLASTLGQHKGPIFALKWNRKGNYILSAGVDKTTIIWDAHTGEAKQQFPFHSAPALDVDWQNNMTFASCSTDMCIHVCRLGCDRPVKTFQGHTNEVNAIKWDPSGMLLASCSDDMTLKIWSMKQEVCIHDLQAHNKEIYTIKWSPTGPATSNPNSNIMLASASFDSTVRLWDIERGVCTHTLTKHQEPVYSVAFSPDGRYLASGSFDKCVHIWNTQSGNLVHSYRGTGGIFEVCWNARGDKVGASASDGSVCVLDLRK.

One can recognise a LisH domain in the interval 55–87 (TSDEVNFLVYRYLQESGFSHSAFTFGIESHISQ). The F-box-like domain occupies 92 to 137 (GTLVPPAALISILQKGLQYVEAEISINEDGTVFDGRPIESLSLIDA). Position 153 is an N6-acetyllysine (Lys-153). The disordered stretch occupies residues 170 to 195 (TSASVSQQNPSKNREATVNGEENRAH). Ser-175 bears the Phosphoserine mark. WD repeat units lie at residues 222-261 (GHES…NGGS), 278-317 (PSNK…ASTL), 319-358 (QHKG…AKQQ), 361-401 (FHSA…KTFQ), 402-441 (GHTN…CIHD), 444-492 (AHNK…CTHT), 495-534 (KHQE…LVHS), and 536-568 (RGTG…LDLR). A Glycyl lysine isopeptide (Lys-Gly) (interchain with G-Cter in SUMO2) cross-link involves residue Lys-332.

It belongs to the WD repeat EBI family. As to quaternary structure, homotetramer; dimer of dimers. Component of the N-Cor repressor complex, at least composed of NCOR1, NCOR2, HDAC3, TBL1X, TBL1R, CORO2A and GPS2. Interacts with GPS2 (when sumoylated); leading to protect GPS2 against degradation by the proteasome. Component of a E3 ubiquitin ligase complex containing UBE2D1, SIAH1, CACYBP/SIP, SKP1, APC and TBL1X. Probably part of other corepressor complexes, that do not contain NCOR1 and NCOR2. Interacts with histones H2B, H3a and H4. Interacts with MECP2; recruits TBL1X to the heterochromatin foci. Interacts with USP44.

It localises to the nucleus. Its function is as follows. F-box-like protein involved in the recruitment of the ubiquitin/19S proteasome complex to nuclear receptor-regulated transcription units. Plays an essential role in transcription activation mediated by nuclear receptors. Probably acts as integral component of corepressor complexes that mediates the recruitment of the 19S proteasome complex, leading to the subsequent proteasomal degradation of transcription repressor complexes, thereby allowing cofactor exchange. This Macaca fascicularis (Crab-eating macaque) protein is F-box-like/WD repeat-containing protein TBL1X (TBL1X).